An 880-amino-acid polypeptide reads, in one-letter code: Translation initiation factor IF-2 (880 aa).

The span at 143–228 (EAEAKAKAKA…EAERNGDHHI (86 aa)) shows a compositional bias: basic and acidic residues. A disordered region spans residues 143–289 (EAEAKAKAKA…APESMAHGFN (147 aa)). The segment covering 249 to 262 (GRRARNKSNAKKRG) has biased composition (basic residues). The 170-residue stretch at 380–549 (SRAPVVTIMG…LLQAEVLELK (170 aa)) folds into the tr-type G domain. Residues 389-396 (GHVDHGKT) are G1. A GTP-binding site is contributed by 389-396 (GHVDHGKT). Residues 414–418 (GITQH) are G2. Residues 435 to 438 (DTPG) form a G3 region. GTP contacts are provided by residues 435 to 439 (DTPGH) and 489 to 492 (NKMD). Residues 489-492 (NKMD) form a G4 region. A G5 region spans residues 525–527 (SAK).

Belongs to the TRAFAC class translation factor GTPase superfamily. Classic translation factor GTPase family. IF-2 subfamily.

Its subcellular location is the cytoplasm. In terms of biological role, one of the essential components for the initiation of protein synthesis. Protects formylmethionyl-tRNA from spontaneous hydrolysis and promotes its binding to the 30S ribosomal subunits. Also involved in the hydrolysis of GTP during the formation of the 70S ribosomal complex. The polypeptide is Translation initiation factor IF-2 (Shewanella putrefaciens (strain CN-32 / ATCC BAA-453)).